The primary structure comprises 423 residues: Lipid droplet-regulating VLDL assembly factor AUP1 (423 aa).

Topologically, residues Met1–Arg19 are cytoplasmic. An intramembrane segment occupies Phe20 to Ile40. Over Phe41–Leu423 the chain is Cytoplasmic. Positions Arg304–Asp346 constitute a CUE domain. The segment at Thr355 to Arg392 is disordered. The segment covering Ala365–Asn377 has biased composition (polar residues).

Belongs to the AUP1 family.

It localises to the endoplasmic reticulum membrane. It is found in the lipid droplet. Its function is as follows. Plays a role in the translocation of terminally misfolded proteins from the endoplasmic reticulum lumen to the cytoplasm and their degradation by the proteasome. Plays a role in lipid droplet formation. Induces lipid droplet clustering. In Danio rerio (Zebrafish), this protein is Lipid droplet-regulating VLDL assembly factor AUP1.